The primary structure comprises 423 residues: Protein CLP1 homolog (423 aa).

ATP-binding positions include E16, K57, and 119–124 (DVGKST).

This sequence belongs to the Clp1 family. Clp1 subfamily.

The protein localises to the nucleus. In terms of biological role, required for endonucleolytic cleavage during polyadenylation-dependent pre-mRNA 3'-end formation. The polypeptide is Protein CLP1 homolog (cbc) (Drosophila simulans (Fruit fly)).